The sequence spans 249 residues: ATP synthase subunit a, chloroplastic (249 aa).

5 consecutive transmembrane segments (helical) span residues 40–60 (QVLI…VLAI), 97–117 (VPFI…GALL), 136–156 (INTT…AGLS), 201–221 (LVVV…VMFL), and 222–242 (GLFT…AYIG).

This sequence belongs to the ATPase A chain family. In terms of assembly, F-type ATPases have 2 components, CF(1) - the catalytic core - and CF(0) - the membrane proton channel. CF(1) has five subunits: alpha(3), beta(3), gamma(1), delta(1), epsilon(1). CF(0) has four main subunits: a, b, b' and c.

The protein localises to the plastid. Its subcellular location is the chloroplast thylakoid membrane. Key component of the proton channel; it plays a direct role in the translocation of protons across the membrane. The chain is ATP synthase subunit a, chloroplastic from Capsella bursa-pastoris (Shepherd's purse).